Here is a 255-residue protein sequence, read N- to C-terminus: AA9 family lytic polysaccharide monooxygenase D (255 aa).

Residues Met-1–Gly-19 form the signal peptide. Residues His-18 and His-92 each coordinate Cu(2+). Disulfide bonds link Cys-65-Cys-189 and Cys-104-Cys-111. A glycan (N-linked (GlcNAc...) asparagine) is linked at Asn-152. O2 is bound by residues His-178 and Gln-184. Tyr-186 serves as a coordination point for Cu(2+). Asn-220 carries an N-linked (GlcNAc...) asparagine glycan.

Belongs to the polysaccharide monooxygenase AA9 family. Requires Cu(2+) as cofactor.

The protein localises to the secreted. It carries out the reaction [(1-&gt;4)-beta-D-glucosyl]n+m + reduced acceptor + O2 = 4-dehydro-beta-D-glucosyl-[(1-&gt;4)-beta-D-glucosyl]n-1 + [(1-&gt;4)-beta-D-glucosyl]m + acceptor + H2O.. Lytic polysaccharide monooxygenase (LPMO) that depolymerizes crystalline and amorphous polysaccharides via the oxidation of scissile alpha- or beta-(1-4)-glycosidic bonds, yielding specifically C1 oxidation product. Catalysis by LPMOs requires the reduction of the active-site copper from Cu(II) to Cu(I) by a reducing agent and H(2)O(2) or O(2) as a cosubstrate. Is active on regenerated amorphous cellulose (RAC) in the presence of ascorbic acid or 3-methylcatechol. Also acts on phosphoric acid swollen cellulose (PASC) as a substrate. This chain is AA9 family lytic polysaccharide monooxygenase D, found in Thermothelomyces thermophilus (strain ATCC 42464 / BCRC 31852 / DSM 1799) (Sporotrichum thermophile).